Consider the following 254-residue polypeptide: Alcohol dehydrogenase (254 aa).

10–33 (FVAGLGGIGLDTSREIVKSGPKNL) is an NAD(+) binding site. S138 contributes to the substrate binding site. Residue Y151 is the Proton acceptor of the active site.

This sequence belongs to the short-chain dehydrogenases/reductases (SDR) family. Homodimer.

The enzyme catalyses a primary alcohol + NAD(+) = an aldehyde + NADH + H(+). It carries out the reaction a secondary alcohol + NAD(+) = a ketone + NADH + H(+). This chain is Alcohol dehydrogenase (Adh), found in Drosophila mimica (Fruit fly).